Reading from the N-terminus, the 457-residue chain is NAC domain-containing protein 69 (457 aa).

One can recognise an NAC domain in the interval 4 to 153 (DLVGYRFYPT…NYVICQVMYK (150 aa)). The DNA-binding element occupies 107–159 (IGIKKTLVYYEGRVPKGVWTPWVMHEYHITCLPQDQRNYVICQVMYKGEDGDV). Disordered stretches follow at residues 158–180 (DVPSGGNNSSEPSQSLVSDSNTV) and 302–332 (DSNSDAESISATSYQGTSSPGDDSVGSSNRQ). A compositionally biased stretch (polar residues) spans 162-180 (GGNNSSEPSQSLVSDSNTV). Residues 302–311 (DSNSDAESIS) are compositionally biased toward low complexity. Polar residues predominate over residues 312–332 (ATSYQGTSSPGDDSVGSSNRQ). The helical transmembrane segment at 421 to 441 (IYLMRMIIGFILLLALISNII) threads the bilayer.

It localises to the membrane. The protein resides in the nucleus. Functionally, transcription activator activated by proteolytic cleavage through regulated intramembrane proteolysis (RIP). Involved in salt stress response during seed germination and seedling growth. Binds the auxin-responsive IAA30 gene promoter and may serve as a molecular link that interconnects a developmental feedback loop of auxin signaling with a salt signal transduction pathway during seed germination. This Arabidopsis thaliana (Mouse-ear cress) protein is NAC domain-containing protein 69 (NAC69).